The sequence spans 236 residues: Large ribosomal subunit protein uL1 (236 aa).

It belongs to the universal ribosomal protein uL1 family. Part of the 50S ribosomal subunit.

Functionally, binds directly to 23S rRNA. The L1 stalk is quite mobile in the ribosome, and is involved in E site tRNA release. Protein L1 is also a translational repressor protein, it controls the translation of the L11 operon by binding to its mRNA. The chain is Large ribosomal subunit protein uL1 from Corynebacterium jeikeium (strain K411).